We begin with the raw amino-acid sequence, 509 residues long: L-arabinose isomerase (509 aa).

Glutamate 313, glutamate 340, histidine 357, and histidine 456 together coordinate Mn(2+).

This sequence belongs to the arabinose isomerase family. Requires Mn(2+) as cofactor.

The catalysed reaction is beta-L-arabinopyranose = L-ribulose. It participates in carbohydrate degradation; L-arabinose degradation via L-ribulose; D-xylulose 5-phosphate from L-arabinose (bacterial route): step 1/3. Catalyzes the conversion of L-arabinose to L-ribulose. This chain is L-arabinose isomerase, found in Bacteroides thetaiotaomicron (strain ATCC 29148 / DSM 2079 / JCM 5827 / CCUG 10774 / NCTC 10582 / VPI-5482 / E50).